A 416-amino-acid polypeptide reads, in one-letter code: Serine hydroxymethyltransferase (416 aa).

(6S)-5,6,7,8-tetrahydrofolate contacts are provided by residues Leu-121 and 125 to 127 (GHL). Lys-230 carries the post-translational modification N6-(pyridoxal phosphate)lysine.

This sequence belongs to the SHMT family. As to quaternary structure, homodimer. Requires pyridoxal 5'-phosphate as cofactor.

Its subcellular location is the cytoplasm. It carries out the reaction (6R)-5,10-methylene-5,6,7,8-tetrahydrofolate + glycine + H2O = (6S)-5,6,7,8-tetrahydrofolate + L-serine. The protein operates within one-carbon metabolism; tetrahydrofolate interconversion. Its pathway is amino-acid biosynthesis; glycine biosynthesis; glycine from L-serine: step 1/1. Functionally, catalyzes the reversible interconversion of serine and glycine with tetrahydrofolate (THF) serving as the one-carbon carrier. This reaction serves as the major source of one-carbon groups required for the biosynthesis of purines, thymidylate, methionine, and other important biomolecules. Also exhibits THF-independent aldolase activity toward beta-hydroxyamino acids, producing glycine and aldehydes, via a retro-aldol mechanism. This Nitrosomonas europaea (strain ATCC 19718 / CIP 103999 / KCTC 2705 / NBRC 14298) protein is Serine hydroxymethyltransferase.